A 591-amino-acid polypeptide reads, in one-letter code: Asparagine synthetase [glutamine-hydrolyzing] 2 (591 aa).

The active-site For GATase activity is Cys2. Positions 2–185 (CGILAVLGVA…PGHLYSSKTG (184 aa)) constitute a Glutamine amidotransferase type-2 domain. Residues 50 to 54 (RLAIV), 75 to 77 (NGE), and Asp98 contribute to the L-glutamine site. Residues 193–516 (PPWFSESIPS…PKNAARLTVP (324 aa)) form the Asparagine synthetase domain. ATP contacts are provided by residues Leu231, Ile267, and 341–342 (SG).

As to expression, expressed in companion cells of leaf sheath vascular bundles, and phloem-parenchyma cells, nucellar projections and nucellar epidermis of dorsal vascular bundles of grains.

It carries out the reaction L-aspartate + L-glutamine + ATP + H2O = L-asparagine + L-glutamate + AMP + diphosphate + H(+). Its pathway is amino-acid biosynthesis; L-asparagine biosynthesis; L-asparagine from L-aspartate (L-Gln route): step 1/1. Essential for nitrogen assimilation, distribution and remobilization within the plant via the phloem. The chain is Asparagine synthetase [glutamine-hydrolyzing] 2 from Oryza sativa subsp. japonica (Rice).